The sequence spans 344 residues: L-rhamnose-proton symporter (344 aa).

A run of 10 helical transmembrane segments spans residues 4 to 24 (AITM…CFYA), 38 to 58 (WSVG…ALLL), 68 to 88 (FSLS…IGNI), 101 to 121 (MGIG…TPII), 137 to 157 (TLLG…AGQL), 175 to 195 (LVLA…MNAA), 214 to 234 (LPSY…FCFI), 259 to 279 (VLLS…YAWG), 290 to 310 (ISWM…GLVL), and 323 to 343 (VLSL…IGMA).

It belongs to the L-rhamnose transporter (TC 2.A.7.6) family.

It is found in the cell inner membrane. The catalysed reaction is L-rhamnopyranose(in) + H(+)(in) = L-rhamnopyranose(out) + H(+)(out). Uptake of L-rhamnose across the cytoplasmic membrane with the concomitant transport of protons into the cell (symport system). This chain is L-rhamnose-proton symporter, found in Shigella dysenteriae serotype 1 (strain Sd197).